The sequence spans 291 residues: Taste receptor type 2 member 16 (291 aa).

A topological domain (extracellular) is located at residue M1. Residues 2–22 (IPIQLTVFFMIIYVLESLTII) form a helical membrane-spanning segment. The Cytoplasmic segment spans residues 23-41 (VQSSLIVAVLGREWLQVRR). The chain crosses the membrane as a helical span at residues 42–62 (LMPVDMILISLGISRFCLQWA). Over 63–84 (SMLNNFCSYFNLNYVLCNLTIT) the chain is Extracellular. N80 carries N-linked (GlcNAc...) asparagine glycosylation. A helical membrane pass occupies residues 85-105 (WEFFNILTFWLNSLLTVFYCI). Residues 106 to 125 (KVSSFTHHIFLWLRWRILRL) are Cytoplasmic-facing. The chain crosses the membrane as a helical span at residues 126–146 (FPWILLGSLMITCVTIIPSAI). Topologically, residues 147-182 (GNYIQIQLLTMEHLPRNSTVTDKLEKFHQYQFQAHT) are extracellular. N163 is a glycosylation site (N-linked (GlcNAc...) asparagine). The chain crosses the membrane as a helical span at residues 183–203 (VALVIPFILFLASTILLMASL). Topologically, residues 204-228 (TKQIQHHSTGHCNPSMKAHFTALRS) are cytoplasmic. The chain crosses the membrane as a helical span at residues 229-249 (LAVLFIVFTSYFLTILITIIG). Over 250–257 (TLFDKRCW) the chain is Extracellular. The chain crosses the membrane as a helical span at residues 258 to 278 (LWVWEAFVYAFILMHSTSLML). Over 279–291 (SSPTLKRILKGKC) the chain is Cytoplasmic.

This sequence belongs to the G-protein coupled receptor T2R family. Interacts with RTP3 and RTP4.

It localises to the cell membrane. Receptor that may play a role in the perception of bitterness and is gustducin-linked. May play a role in sensing the chemical composition of the gastrointestinal content. The activity of this receptor may stimulate alpha gustducin, mediate PLC-beta-2 activation and lead to the gating of TRPM5. The sequence is that of Taste receptor type 2 member 16 (TAS2R16) from Pan troglodytes (Chimpanzee).